The primary structure comprises 489 residues: Pre-glycoprotein polyprotein GP complex (489 aa).

Gly-2 is lipidated: N-myristoyl glycine; by host. Topologically, residues 2-17 (GQIVTFFQEVPHILEE) are extracellular. The chain crosses the membrane as a helical span at residues 18–33 (VMNIVLMTLSILAILK). At 34–58 (GIYNVMTCGIIGLITFLFLCGRSCS) the chain is on the cytoplasmic side. Residue Cys-57 coordinates Zn(2+). Residues 59 to 430 (SIYKDNYEFF…QSTTPLGLVD (372 aa)) are Extracellular-facing. Asn-78, Asn-88, Asn-98, Asn-108, Asn-118, and Asn-166 each carry an N-linked (GlcNAc...) asparagine; by host glycan. 6 cysteine pairs are disulfide-bonded: Cys-85/Cys-229, Cys-117/Cys-154, Cys-179/Cys-210, Cys-277/Cys-290, Cys-299/Cys-308, and Cys-362/Cys-383. An N-linked (GlcNAc...) asparagine; by host glycan is attached at Asn-222. N-linked (GlcNAc...) asparagine; by host glycosylation is found at Asn-363, Asn-371, Asn-388, and Asn-393. The helical transmembrane segment at 431 to 451 (LFVFSTSFYLISVFLHLIKIP) threads the bilayer. Residues 452–489 (THRHIKGKPCPKPHRLNHMAICSCGFYKQPGLPTQWKR) lie on the Cytoplasmic side of the membrane. The Zn(2+) site is built by His-453, His-455, Cys-461, His-465, Cys-473, and Cys-475.

This sequence belongs to the arenaviridae GPC protein family. In terms of assembly, interacts with glycoprotein G2. Part of the GP complex (GP-C) together with glycoprotein G1 and glycoprotein G2. The GP-complex interacts with protein Z, which interacts with ribonucleocapsid; these interactions may induce virion budding. As to quaternary structure, homotrimer; disulfide-linked. In pre-fusion state, G1 homotrimers bind G2 homotrimers via ionic interactions. Part of the GP complex (GP-C) together with glycoprotein G2 and the stable signal peptide. The GP-complex interacts with protein Z, which interacts with ribonucleocapsid; these interactions may induce virion budding. Homotrimer. Interacts with the stable signal peptide. In pre-fusion state, G2 homotrimers bind G1 homotrimers via ionic interactions. Part of the GP complex (GP-C) together with glycoprotein G1 and the stable signal peptide. Acidification in the endosome triggers rearrangements, which ultimately leads to a 6 helix bundle formed by the two heptad repeat domains (HR1 and HR2) in post-fusion state. The GP-complex interacts with protein Z, which interacts with ribonucleocapsid; these interactions may induce virion budding. In terms of processing, specific enzymatic cleavages in vivo yield mature proteins. GP-C polyprotein is cleaved in the endoplasmic reticulum by the host protease MBTPS1. Only cleaved glycoprotein is incorporated into virions. The SSP remains stably associated with the GP complex following cleavage by signal peptidase and plays crucial roles in the trafficking of GP through the secretory pathway. Post-translationally, myristoylation is necessary for GP2-mediated fusion activity.

Its subcellular location is the virion membrane. The protein resides in the host endoplasmic reticulum membrane. It is found in the host Golgi apparatus membrane. The protein localises to the host cell membrane. Functionally, functions as a cleaved signal peptide that is retained as the third component of the GP complex (GP-C). Helps to stabilize the spike complex in its native conformation. The SSP is required for efficient glycoprotein expression, post-translational maturation cleavage of G1 and G2, glycoprotein transport to the cell surface plasma membrane, formation of infectious virus particles, and acid pH-dependent glycoprotein-mediated cell fusion. In terms of biological role, forms the virion spikes together with glycoprotein G2. The glycoprotein spike trimers are connected to the underlying matrix. Interacts with the host receptor leading to virus endocytosis. Forms the virion spikes together with glycoprotein G1. The glycoprotein spike trimers are connected to the underlying matrix. Class I viral fusion protein that directs fusion of viral and host endosomal membranes, leading to delivery of the nucleocapsid into the cytoplasm. Membrane fusion is mediated by irreversible conformational changes induced by acidification. The protein is Pre-glycoprotein polyprotein GP complex of Mastomys natalensis (African soft-furred rat).